A 210-amino-acid polypeptide reads, in one-letter code: Ribosomal RNA small subunit methyltransferase G (210 aa).

S-adenosyl-L-methionine-binding positions include G76, L81, 127 to 128 (VE), and R142.

The protein belongs to the methyltransferase superfamily. RNA methyltransferase RsmG family.

The protein resides in the cytoplasm. The enzyme catalyses guanosine(527) in 16S rRNA + S-adenosyl-L-methionine = N(7)-methylguanosine(527) in 16S rRNA + S-adenosyl-L-homocysteine. In terms of biological role, specifically methylates the N7 position of guanine in position 527 of 16S rRNA. The protein is Ribosomal RNA small subunit methyltransferase G of Vibrio cholerae serotype O1 (strain ATCC 39315 / El Tor Inaba N16961).